A 327-amino-acid polypeptide reads, in one-letter code: MKEISGIKVKVESGSKYTTDHGFHAVKDGIRNKKENAVHVRKPDWLKVQKQDSKEYLKVKSITKKHKLSTVCEEARCPNINECWSHGTATIMLMGSVCTRACKFCSVDTGNPKGWLDKDEPMNAAESVKLMGLEYVVLTSVDRDDLEDGGAGHYAATITAIKNLDENIKVEALTPDFAGINENIDKIINTKVDVIAQNIETVERLTHPVRDPRAGYWQTLNFLKYVKQKSPNVLTKTSIMVGLGETDEEIYKTMDDARSVGVDIITLGQYMQPTKHHLSVERFVTPQQFEEYRKVGLEKGFLEVASGPMVRSSYRADRVFKRNNLDL.

The [4Fe-4S] cluster site is built by Cys72, Cys77, Cys83, Cys98, Cys102, Cys105, and Ser313. One can recognise a Radical SAM core domain in the interval 83 to 302 (CWSHGTATIM…RKVGLEKGFL (220 aa)).

The protein belongs to the radical SAM superfamily. Lipoyl synthase family. Requires [4Fe-4S] cluster as cofactor.

The protein resides in the cytoplasm. It carries out the reaction [[Fe-S] cluster scaffold protein carrying a second [4Fe-4S](2+) cluster] + N(6)-octanoyl-L-lysyl-[protein] + 2 oxidized [2Fe-2S]-[ferredoxin] + 2 S-adenosyl-L-methionine + 4 H(+) = [[Fe-S] cluster scaffold protein] + N(6)-[(R)-dihydrolipoyl]-L-lysyl-[protein] + 4 Fe(3+) + 2 hydrogen sulfide + 2 5'-deoxyadenosine + 2 L-methionine + 2 reduced [2Fe-2S]-[ferredoxin]. Its pathway is protein modification; protein lipoylation via endogenous pathway; protein N(6)-(lipoyl)lysine from octanoyl-[acyl-carrier-protein]: step 2/2. Its function is as follows. Catalyzes the radical-mediated insertion of two sulfur atoms into the C-6 and C-8 positions of the octanoyl moiety bound to the lipoyl domains of lipoate-dependent enzymes, thereby converting the octanoylated domains into lipoylated derivatives. This is Lipoyl synthase from Francisella tularensis subsp. novicida (strain U112).